The primary structure comprises 418 residues: D-amino acid dehydrogenase (418 aa).

Val3–Trp17 contributes to the FAD binding site.

This sequence belongs to the DadA oxidoreductase family. It depends on FAD as a cofactor.

It carries out the reaction a D-alpha-amino acid + A + H2O = a 2-oxocarboxylate + AH2 + NH4(+). In terms of biological role, oxidative deamination of D-amino acids. This Neisseria meningitidis serogroup A / serotype 4A (strain DSM 15465 / Z2491) protein is D-amino acid dehydrogenase.